A 221-amino-acid polypeptide reads, in one-letter code: Large ribosomal subunit protein uL3 (221 aa).

A disordered region spans residues 123–156; that stretch reads GFAGSIKRHNQSRGPESHGSRYHRRPGSMGPIKG.

The protein belongs to the universal ribosomal protein uL3 family. Part of the 50S ribosomal subunit. Forms a cluster with proteins L14 and L19.

One of the primary rRNA binding proteins, it binds directly near the 3'-end of the 23S rRNA, where it nucleates assembly of the 50S subunit. In Aster yellows witches'-broom phytoplasma (strain AYWB), this protein is Large ribosomal subunit protein uL3.